The primary structure comprises 500 residues: Phosphatidylserine decarboxylase proenzyme 1, mitochondrial (500 aa).

The transit peptide at methionine 1 to leucine 48 directs the protein to the mitochondrion; not cleaved when targeted to the endoplasmic reticulum. N-linked (GlcNAc...) asparagine glycosylation occurs at asparagine 34. Topologically, residues serine 45 to tryptophan 79 are mitochondrial matrix. Residues glycine 57–threonine 101 form an enables targeting to the endoplasmic reticulum in addition to mitochondria region. A helical membrane pass occupies residues valine 80–asparagine 98. At aspartate 99–lysine 500 the chain is on the mitochondrial intermembrane side. Active-site charge relay system; for autoendoproteolytic cleavage activity residues include aspartate 210, histidine 348, and serine 463. The Schiff-base intermediate with substrate; via pyruvic acid; for decarboxylase activity role is filled by serine 463. The residue at position 463 (serine 463) is a Pyruvic acid (Ser); by autocatalysis. Residues phenylalanine 475 to glycine 492 form a required for processing and stability region.

It belongs to the phosphatidylserine decarboxylase family. PSD-B subfamily. Eukaryotic type I sub-subfamily. In terms of assembly, heterodimer of a large membrane-associated beta subunit and a small pyruvoyl-containing alpha subunit. Requires pyruvate as cofactor. Glycosylated at Asn-34 in the endoplasmic reticulum. In terms of processing, the precursor is imported via the TOM complex into mitochondria, where the N-terminal presequence is cleaved by the matrix-located proteases MPP (MAS1-MAS2) and OCT1. Post-translationally, is synthesized initially as an inactive proenzyme. Formation of the active enzyme involves a self-maturation process in which the active site pyruvoyl group is generated from an internal serine residue via an autocatalytic post-translational modification. Two non-identical subunits are generated from the proenzyme in this reaction, and the pyruvate is formed at the N-terminus of the alpha chain, which is derived from the carboxyl end of the proenzyme. The autoendoproteolytic cleavage occurs by a canonical serine protease mechanism, in which the side chain hydroxyl group of the serine supplies its oxygen atom to form the C-terminus of the beta chain, while the remainder of the serine residue undergoes an oxidative deamination to produce ammonia and the pyruvoyl prosthetic group on the alpha chain. During this reaction, the Ser that is part of the protease active site of the proenzyme becomes the pyruvoyl prosthetic group, which constitutes an essential element of the active site of the mature decarboxylase.

It localises to the mitochondrion inner membrane. Its subcellular location is the lipid droplet. It is found in the endoplasmic reticulum membrane. The enzyme catalyses a 1,2-diacyl-sn-glycero-3-phospho-L-serine + H(+) = a 1,2-diacyl-sn-glycero-3-phosphoethanolamine + CO2. It functions in the pathway phospholipid metabolism; phosphatidylethanolamine biosynthesis; phosphatidylethanolamine from CDP-diacylglycerol: step 2/2. Its function is as follows. Catalyzes the formation of phosphatidylethanolamine (PtdEtn) from phosphatidylserine (PtdSer). Plays a central role in phospholipid metabolism and in the interorganelle trafficking of phosphatidylserine. Phosphatidylethanolamine formed in the mitochondria is exported to other membranes to fullfill their requirements for PtdEtn. Required for normal mitochondrial morphology and proper mitochondrial fusion during yeast mating. Involved in lipid droplet biogenesis at the endoplasmic reticulum membrane. Required for induction of mitophagy during nitrogen starvation. Appears to play a specific role in supporting respiratory complex III activity. The polypeptide is Phosphatidylserine decarboxylase proenzyme 1, mitochondrial (Saccharomyces cerevisiae (strain ATCC 204508 / S288c) (Baker's yeast)).